We begin with the raw amino-acid sequence, 905 residues long: DNA gyrase subunit A (905 aa).

The region spanning 35-524 (IPDVRDGLKP…GEFDQDIEDL (490 aa)) is the Topo IIA-type catalytic domain. The active-site O-(5'-phospho-DNA)-tyrosine intermediate is Tyr123. A GyrA-box motif is present at residues 551–557 (QKRGGKG).

It belongs to the type II topoisomerase GyrA/ParC subunit family. As to quaternary structure, heterotetramer, composed of two GyrA and two GyrB chains. In the heterotetramer, GyrA contains the active site tyrosine that forms a transient covalent intermediate with DNA, while GyrB binds cofactors and catalyzes ATP hydrolysis.

Its subcellular location is the cytoplasm. The catalysed reaction is ATP-dependent breakage, passage and rejoining of double-stranded DNA.. Functionally, a type II topoisomerase that negatively supercoils closed circular double-stranded (ds) DNA in an ATP-dependent manner to modulate DNA topology and maintain chromosomes in an underwound state. Negative supercoiling favors strand separation, and DNA replication, transcription, recombination and repair, all of which involve strand separation. Also able to catalyze the interconversion of other topological isomers of dsDNA rings, including catenanes and knotted rings. Type II topoisomerases break and join 2 DNA strands simultaneously in an ATP-dependent manner. The polypeptide is DNA gyrase subunit A (Rickettsia prowazekii (strain Madrid E)).